A 447-amino-acid polypeptide reads, in one-letter code: Innexin-5 (447 aa).

Transmembrane regions (helical) follow at residues 30-47 (TSTL…SQYV), 108-128 (QWIP…SIIW), 198-218 (ALYL…FWIL), and 283-303 (VYVF…CSLA). Positions 389–447 (KKDDDSALPASAPVDLQEDDDDDTPFPPPTKAVAETLTSDDEEEETDVDSPDTTATLPR) are disordered. The span at 426 to 438 (TSDDEEEETDVDS) shows a compositional bias: acidic residues.

It belongs to the pannexin family.

Its subcellular location is the cell membrane. It localises to the cell junction. The protein localises to the gap junction. Functionally, structural component of the gap junctions. The protein is Innexin-5 (inx-5) of Caenorhabditis elegans.